The sequence spans 499 residues: Importin subunit alpha-8 (499 aa).

The 57-residue stretch at 1–57 folds into the IBB domain; the sequence is MATSKAPKERLKNYKYRGKEMSLPRQQRIASSLQLRKTRKDEQVLKRRNIDLFSSDM. 8 ARM repeats span residues 101–141, 144–183, 186–226, 229–268, 271–310, 313–352, 354–393, and 397–436; these read TPPL…NIAS, SEQT…NIAG, AEFR…NLCR, DPYP…YLTK, KEYI…NIVA, DEQT…NVAA, PRHQ…NIAT, and QDQL…YLLQ.

This sequence belongs to the importin alpha family. In terms of assembly, binds to importin subunit beta-1/KPNB1 via the IBB domain; this complex dissociates in the presence of RAN-GTP. Shows a limited binding to the RB1 nuclear localization signal (NLS), but not to the SV40, nor NPM1 NLSs. Interacts with RSL1D1. Expressed predominantly in ovary. Isoform 1 is the predominant form.

Its subcellular location is the nucleus. In terms of biological role, functions in nuclear protein import. The polypeptide is Importin subunit alpha-8 (Kpna7) (Mus musculus (Mouse)).